A 558-amino-acid chain; its full sequence is 2-hydroxy-7-methoxy-5-methyl-1-naphthoate--CoA ligase (558 aa).

Residues 212–213 (GG), 329–331 (ASR), valine 351, aspartate 435, arginine 450, and lysine 542 contribute to the ATP site.

This sequence belongs to the ATP-dependent AMP-binding enzyme family.

The catalysed reaction is 2-hydroxy-7-methoxy-5-methyl-1-naphthoate + ATP + CoA = 2-hydroxy-7-methoxy-5-methyl-1-naphthoyl-CoA + AMP + diphosphate. The protein operates within antibiotic biosynthesis. In terms of biological role, catalyzes the activation of 2-hydroxy-7-methoxy-5-methyl-1-naphthoate in the biosynthesis of the naphthoate moiety of the neocarzinostatin chromophore. Also catalyzes the activation of other 1-naphthoic acid analogs such as 2-hydroxy-5-methyl-1-naphthoate or 2,7-dihydroxy-5-methyl-1-naphthoate in vitro. The chain is 2-hydroxy-7-methoxy-5-methyl-1-naphthoate--CoA ligase from Streptomyces carzinostaticus.